The sequence spans 355 residues: Plasmodial-specific protein LAV1-2 (355 aa).

2 consecutive EF-hand domains span residues 151 to 186 (EDTNILRQLFLSSAVSGSGKFSFQDLKQVLAKYADT) and 217 to 252 (NDLAALVADFRKIDTNSNGTLSRKEFREHFVRLGFD). Ca(2+) contacts are provided by Asp-230, Asn-232, Asn-234, Thr-236, Glu-241, Asp-265, Asp-267, Ser-269, Asp-271, Glu-276, Asp-295, Asp-297, Ser-299, Gln-301, Glu-306, Asp-332, Asp-334, Ser-336, Ser-338, and Glu-343. 2 EF-hand domains span residues 282–317 (LCLLVLRILYAFADFDKSGQLSKEEVQKVLEDAHIP) and 319–354 (SARKKFEHQFSVVDVDDSKSLSYQEFVMLVLLMFHD).

The chain is Plasmodial-specific protein LAV1-2 from Physarum polycephalum (Slime mold).